Here is a 183-residue protein sequence, read N- to C-terminus: Apo-citrate lyase phosphoribosyl-dephospho-CoA transferase (183 aa).

Belongs to the CitX family.

It carries out the reaction apo-[citrate lyase ACP] + 2'-(5''-triphospho-alpha-D-ribosyl)-3'-dephospho-CoA = holo-[citrate lyase ACP] + diphosphate. Its function is as follows. Transfers 2-(5''-triphosphoribosyl)-3'-dephosphocoenzyme-A on a serine residue to the apo-acyl carrier protein (gamma chain) of the citrate lyase to yield holo-acyl carrier protein. The protein is Apo-citrate lyase phosphoribosyl-dephospho-CoA transferase of Escherichia coli O7:K1 (strain IAI39 / ExPEC).